The sequence spans 888 residues: Potassium channel AKT6 (888 aa).

The Cytoplasmic segment spans residues 1–84 (MEKKKVWFWG…PFDPRYRAWE (84 aa)). Residues 10–31 (GVKDDGEGGGGRGGGRTKDAED) form a disordered region. A helical membrane pass occupies residues 85–105 (TFLVFLVLYTAWASPFEFGFL). Topologically, residues 106–113 (QKPRPPLS) are extracellular. Residues 114-134 (ILDNIVNGFFAVDIVLTFFVA) form a helical membrane-spanning segment. Topologically, residues 135 to 155 (FLDKVTYLLVDDPKRIAWRYA) are cytoplasmic. Residues 156 to 176 (STWLIFDVVSTFPYEIFGSLL) traverse the membrane as a helical segment. Over 177-184 (HESIQGYG) the chain is Extracellular. The helical; Voltage-sensor transmembrane segment at 185–205 (IFSMLRLWRLRRVSNCFARLE) threads the bilayer. At 206–219 (KDRKYSYFWVRCSK) the chain is on the cytoplasmic side. The helical transmembrane segment at 220 to 240 (LLLVTLFVIHCGACFLYSIAA) threads the bilayer. The Extracellular segment spans residues 241–267 (HYPDPSKTFMALTDENWKESPIAVRYN). Positions 268–287 (TAMYWSITTFSTTGYGDIHG) form an intramembrane region, pore-forming. Over 288 to 291 (VNSR) the chain is Extracellular. Residues 292-312 (EMTFILFYMVFNLGLSAYIIG) traverse the membrane as a helical segment. Residues 313 to 888 (NMTNLVVHVT…GDFLLLSRDP (576 aa)) lie on the Cytoplasmic side of the membrane. 398 to 519 (LFHGISNDLL…IMNNLLQHLK (122 aa)) is a binding site for a nucleoside 3',5'-cyclic phosphate. 5 ANK repeats span residues 543–572 (DLPL…SPNE), 576–605 (DGRT…DPNI), 609–638 (EGNV…KLSL), 640–669 (SVSY…DVTL), and 673–702 (NGTT…DLDW). One can recognise a KHA domain in the interval 822-888 (RVTISSPENG…GDFLLLSRDP (67 aa)).

The protein belongs to the potassium channel family. Plant (TC 1.A.1.4) subfamily. The potassium channel is probably composed of a homo- or heterotetrameric complex of pore-forming subunits. As to expression, predominantly expressed in flowers; especially in pollen.

It localises to the membrane. Its function is as follows. Highly selective inward-rectifying potassium channel that could mediate potassium uptake in the pollen membrane. Plays an important role in pollen tube development. Assuming opened or closed conformations in response to the voltage difference across the membrane, the channel is activated by hyperpolarization. May interact with the cytoskeleton or with regulatory proteins. In Arabidopsis thaliana (Mouse-ear cress), this protein is Potassium channel AKT6 (AKT6).